Here is a 268-residue protein sequence, read N- to C-terminus: Hydroxyethylthiazole kinase (268 aa).

Residue M46 coordinates substrate. Positions 122 and 168 each coordinate ATP. G195 serves as a coordination point for substrate.

The protein belongs to the Thz kinase family. It depends on Mg(2+) as a cofactor.

It carries out the reaction 5-(2-hydroxyethyl)-4-methylthiazole + ATP = 4-methyl-5-(2-phosphooxyethyl)-thiazole + ADP + H(+). Its pathway is cofactor biosynthesis; thiamine diphosphate biosynthesis; 4-methyl-5-(2-phosphoethyl)-thiazole from 5-(2-hydroxyethyl)-4-methylthiazole: step 1/1. Its function is as follows. Catalyzes the phosphorylation of the hydroxyl group of 4-methyl-5-beta-hydroxyethylthiazole (THZ). The chain is Hydroxyethylthiazole kinase from Desulfatibacillum aliphaticivorans.